Reading from the N-terminus, the 315-residue chain is MAFPEPKPRAPELPQKRMKTLDCSQGAVRAVRFNVDGNYCLTCGSDKTLKLWNPLRGTLLRTYSGHGYEVLDAAGSFDNSHLCSGGGDKTVVLWDVATGQVVRKFRGHAGKVNTVQFNEEATVILSGSIDSSVRCWDCRSRKPEPVQTLDEARDGISSVKVSDHEILAGSVDGRVRRYDLRMGQVSSDYVGSPITCTCFSRDGQCTLISSLDSTLRLLDKDTGELLGEYVGHKNQQYKLDCCLSERDTHVVSCSEDGKVFFWDLVEGALALALPVGSNVVQSLAYHPTEPCLLTAMGGSIQYWREETYEAEGGAG.

WD repeat units follow at residues 23–62, 65–104, 107–146, 151–188, 190–228, 231–272, and 275–313; these read CSQGAVRAVRFNVDGNYCLTCGSDKTLKLWNPLRGTLLRT, GHGYEVLDAAGSFDNSHLCSGGGDKTVVLWDVATGQVVRK, GHAGKVNTVQFNEEATVILSGSIDSSVRCWDCRSRKPEPV, EARDGISSVKVSDHEILAGSVDGRVRRYDLRMGQVSSD, VGSPITCTCFSRDGQCTLISSLDSTLRLLDKDTGELLGE, GHKN…LALA, and VGSNVVQSLAYHPTEPCLLTAMGGSIQYWREETYEAEGG.

It belongs to the WD repeat MORG1 family. Interacts with EGLN3/PHD3. Interacts with ERK signaling proteins MAP2K1/MEK1, MAP2K2/MEK2, LAMTOR3, ARAF/Raf-1, MAPK1/ERK2 and MAPK3/ERK1. Identified in the spliceosome C complex. Interacts with PARD6B and CRB3. Interacts strongly with GTP-bound RRAGA but not with inactive GDP-bound. Interacts with p62/SQSTM1. Ubiquitous.

The protein resides in the cytoplasm. Its subcellular location is the lysosome. It is found in the nucleus. Its function is as follows. Molecular scaffold protein for various multimeric protein complexes. Acts as a module in the assembly of a multicomponent scaffold for the ERK pathway, linking ERK responses to specific agonists. At low concentrations it enhances ERK activation, whereas high concentrations lead to the inhibition of ERK activation. Also involved in response to hypoxia by acting as a negative regulator of HIF1A/HIF-1-alpha via its interaction with EGLN3/PHD3. May promote degradation of HIF1A. May act by recruiting signaling complexes to a specific upstream activator. May also be involved in pre-mRNA splicing. Participates in tight junction development by regulating apico-basal polarity, a key step in tissue development and organization. Mechanistically, regulates the translocation of PAR6-aPKC from the cytoplasm to the apical surface by acting as an adapter between PARD6B AND CRB3. Also acts as a negative regulator of mTORC1 under nutrient-rich conditions by binding to the active Rag GTPases to inhibit mTORC1 localization to the lysosome and phosphorylation of downstream targets. This facilitates constitutive basal autophagy during nutrient availability. The protein is WD repeat domain-containing protein 83 (Wdr83) of Mus musculus (Mouse).